The chain runs to 548 residues: MTNRSQLASWQALEKSATKMKQSHLRDLFAKDDARFSQFSTQIPGLLFDYSKQRIDKDVFTQLIALAKECDISAWREKMFNGEKINITENRAVLHTALRNRAHTPLIVDGENVTELVDNELAKIKLFVEKVRSGKWLGYSGKPVKDVVSIGVGGSNLGPQMATEALKALSDDTLNVHYVSNADGVQIASVLKNIDAETTLFVIASKTFTTSETMTNAKTAVDWFLQTAKDNAAIAKHFVAVSTNLEKTAEFGISNDNVFTMWDWVGGRFSLWSAIGLPIALYAGYDAFEAILEGAYEVDEHFKNAPLEQNIPLIMALLSVWNTSFLGYTSQAILPYDQALHMLPAYLQQGEMESNGKHVNFAGETVPYTTVPIIWGMTGINGQHAFYQCLHQGNVIVPADFIASIKPQVNVDKHHDILLSNFFAQTEALMNGVDEQEITADLTAKGKSQAQIDELLKHKIHQGNRPTTSMLLDSVDAKTVGRLIALYEHKIFCQGIILEICSFDQWGVELGKGLASKIEAELVDERVKYAHDSSTNGLMAYYKQHRTQ.

Catalysis depends on E353, which acts as the Proton donor. Residues H384 and K512 contribute to the active site.

This sequence belongs to the GPI family.

The protein localises to the cytoplasm. It catalyses the reaction alpha-D-glucose 6-phosphate = beta-D-fructose 6-phosphate. It participates in carbohydrate biosynthesis; gluconeogenesis. It functions in the pathway carbohydrate degradation; glycolysis; D-glyceraldehyde 3-phosphate and glycerone phosphate from D-glucose: step 2/4. Functionally, catalyzes the reversible isomerization of glucose-6-phosphate to fructose-6-phosphate. This chain is Glucose-6-phosphate isomerase, found in Pseudoalteromonas translucida (strain TAC 125).